Consider the following 527-residue polypeptide: Bifunctional purine biosynthesis protein PurH (527 aa).

The 149-residue stretch at 1-149 folds into the MGS-like domain; it reads MASDFLPVRR…KNFARVAVAT (149 aa).

The protein belongs to the PurH family.

It carries out the reaction (6R)-10-formyltetrahydrofolate + 5-amino-1-(5-phospho-beta-D-ribosyl)imidazole-4-carboxamide = 5-formamido-1-(5-phospho-D-ribosyl)imidazole-4-carboxamide + (6S)-5,6,7,8-tetrahydrofolate. It catalyses the reaction IMP + H2O = 5-formamido-1-(5-phospho-D-ribosyl)imidazole-4-carboxamide. It functions in the pathway purine metabolism; IMP biosynthesis via de novo pathway; 5-formamido-1-(5-phospho-D-ribosyl)imidazole-4-carboxamide from 5-amino-1-(5-phospho-D-ribosyl)imidazole-4-carboxamide (10-formyl THF route): step 1/1. It participates in purine metabolism; IMP biosynthesis via de novo pathway; IMP from 5-formamido-1-(5-phospho-D-ribosyl)imidazole-4-carboxamide: step 1/1. In Xanthomonas oryzae pv. oryzae (strain PXO99A), this protein is Bifunctional purine biosynthesis protein PurH.